The primary structure comprises 112 residues: Large ribosomal subunit protein uL22 (112 aa).

The protein belongs to the universal ribosomal protein uL22 family. Part of the 50S ribosomal subunit.

This protein binds specifically to 23S rRNA; its binding is stimulated by other ribosomal proteins, e.g. L4, L17, and L20. It is important during the early stages of 50S assembly. It makes multiple contacts with different domains of the 23S rRNA in the assembled 50S subunit and ribosome. Functionally, the globular domain of the protein is located near the polypeptide exit tunnel on the outside of the subunit, while an extended beta-hairpin is found that lines the wall of the exit tunnel in the center of the 70S ribosome. The polypeptide is Large ribosomal subunit protein uL22 (Nitratidesulfovibrio vulgaris (strain ATCC 29579 / DSM 644 / CCUG 34227 / NCIMB 8303 / VKM B-1760 / Hildenborough) (Desulfovibrio vulgaris)).